A 196-amino-acid chain; its full sequence is Translation machinery-associated protein 22 (196 aa).

The SUI1 domain maps to 97 to 168 (VIVKREARTK…EVVAYIHSLL (72 aa)).

This sequence belongs to the DENR family. Interacts with the 40S ribosomal subunit.

The protein resides in the cytoplasm. In Candida glabrata (strain ATCC 2001 / BCRC 20586 / JCM 3761 / NBRC 0622 / NRRL Y-65 / CBS 138) (Yeast), this protein is Translation machinery-associated protein 22 (TMA22).